We begin with the raw amino-acid sequence, 178 residues long: RNA-binding protein (178 aa).

Residues 108–178 are disordered; that stretch reads SGFQKPKIGS…KGKGRRGGKR (71 aa). Over residues 168–178 the composition is skewed to basic residues; sequence SKGKGRRGGKR.

Belongs to the phytoreovirus RNA-binding protein family.

It localises to the host cytoplasm. Its function is as follows. Constituent of viral factories. Binds to ssRNA and dsRNA. This is RNA-binding protein from Wound tumor virus (strain NJ) (WTV).